The primary structure comprises 72 residues: Disintegrin batroxostatin (72 aa).

In terms of domain architecture, Disintegrin spans 1 to 72 (EAGEECDCGA…SADCPRNRFY (72 aa)). Intrachain disulfides connect Cys-6–Cys-21, Cys-8–Cys-16, Cys-15–Cys-38, Cys-29–Cys-35, Cys-34–Cys-59, and Cys-47–Cys-66. Positions 51 to 53 (RGD) match the Cell attachment site motif. Residues 52–72 (GDNPDDRCTGQSADCPRNRFY) form a disordered region.

It belongs to the venom metalloproteinase (M12B) family. P-II subfamily. P-IIa sub-subfamily. In terms of assembly, monomer. As to expression, expressed by the venom gland.

The protein resides in the secreted. Functionally, inhibits fibrinogen interaction with platelets. Acts by binding to the glycoprotein IIb-IIIa receptor (ITGA2B/ITGB3) on the platelet surface and inhibits aggregation induced by ADP, thrombin, platelet-activating factor and collagen. Also inhibits T24 and SK-Mel-28 cell adhesion to fibronectin with IC(50) of 4.4 uM and 33 nM, respectively. This is Disintegrin batroxostatin from Bothrops atrox (Barba amarilla).